Here is a 407-residue protein sequence, read N- to C-terminus: Na(+)-translocating NADH-quinone reductase subunit F (407 aa).

Residues 3–23 (IILGVAMFTGIVMVLVLLILF) traverse the membrane as a helical segment. A 2Fe-2S ferredoxin-type domain is found at 32–126 (GDIAVEVNGD…NLKIELPEEI (95 aa)). [2Fe-2S] cluster-binding residues include cysteine 69, cysteine 75, cysteine 78, and cysteine 110. Residues 129–269 (VKKWECEVIS…SGPFGEFFAK (141 aa)) enclose the FAD-binding FR-type domain.

Belongs to the NqrF family. In terms of assembly, composed of six subunits; NqrA, NqrB, NqrC, NqrD, NqrE and NqrF. It depends on [2Fe-2S] cluster as a cofactor. Requires FAD as cofactor.

The protein localises to the cell inner membrane. It carries out the reaction a ubiquinone + n Na(+)(in) + NADH + H(+) = a ubiquinol + n Na(+)(out) + NAD(+). Functionally, NQR complex catalyzes the reduction of ubiquinone-1 to ubiquinol by two successive reactions, coupled with the transport of Na(+) ions from the cytoplasm to the periplasm. The first step is catalyzed by NqrF, which accepts electrons from NADH and reduces ubiquinone-1 to ubisemiquinone by a one-electron transfer pathway. This Serratia proteamaculans (strain 568) protein is Na(+)-translocating NADH-quinone reductase subunit F.